Here is a 95-residue protein sequence, read N- to C-terminus: Small ribosomal subunit protein uS17 (95 aa).

This sequence belongs to the universal ribosomal protein uS17 family. As to quaternary structure, part of the 30S ribosomal subunit.

One of the primary rRNA binding proteins, it binds specifically to the 5'-end of 16S ribosomal RNA. The sequence is that of Small ribosomal subunit protein uS17 from Streptomyces coelicolor (strain ATCC BAA-471 / A3(2) / M145).